Here is a 556-residue protein sequence, read N- to C-terminus: Arginine--tRNA ligase (556 aa).

A 'HIGH' region motif is present at residues 132-142; it reads ANPTGDLHLGH.

This sequence belongs to the class-I aminoacyl-tRNA synthetase family. Monomer.

It is found in the cytoplasm. The catalysed reaction is tRNA(Arg) + L-arginine + ATP = L-arginyl-tRNA(Arg) + AMP + diphosphate. The polypeptide is Arginine--tRNA ligase (Listeria monocytogenes serovar 1/2a (strain ATCC BAA-679 / EGD-e)).